A 383-amino-acid polypeptide reads, in one-letter code: S-adenosylmethionine synthase (383 aa).

Histidine 15 is an ATP binding site. Residue aspartate 17 coordinates Mg(2+). A K(+)-binding site is contributed by glutamate 43. L-methionine contacts are provided by glutamate 56 and glutamine 99. The interval 99 to 109 (QSPDINQGVDR) is flexible loop. Residues 164 to 166 (DAK), 230 to 231 (RF), aspartate 239, 245 to 246 (RK), alanine 262, and lysine 266 each bind ATP. Aspartate 239 is a binding site for L-methionine. Lysine 270 serves as a coordination point for L-methionine.

This sequence belongs to the AdoMet synthase family. Homotetramer; dimer of dimers. The cofactor is Mg(2+). Requires K(+) as cofactor.

The protein localises to the cytoplasm. The catalysed reaction is L-methionine + ATP + H2O = S-adenosyl-L-methionine + phosphate + diphosphate. It participates in amino-acid biosynthesis; S-adenosyl-L-methionine biosynthesis; S-adenosyl-L-methionine from L-methionine: step 1/1. Catalyzes the formation of S-adenosylmethionine (AdoMet) from methionine and ATP. The overall synthetic reaction is composed of two sequential steps, AdoMet formation and the subsequent tripolyphosphate hydrolysis which occurs prior to release of AdoMet from the enzyme. This Pectobacterium carotovorum subsp. carotovorum (strain PC1) protein is S-adenosylmethionine synthase.